A 334-amino-acid polypeptide reads, in one-letter code: Adenosine deaminase (334 aa).

The Zn(2+) site is built by H12 and H14. H14, D16, and G170 together coordinate substrate. Residue H197 participates in Zn(2+) binding. Residue E200 is the Proton donor of the active site. Residue D278 coordinates Zn(2+). A substrate-binding site is contributed by D279.

The protein belongs to the metallo-dependent hydrolases superfamily. Adenosine and AMP deaminases family. Adenosine deaminase subfamily. Zn(2+) serves as cofactor.

The enzyme catalyses adenosine + H2O + H(+) = inosine + NH4(+). It carries out the reaction 2'-deoxyadenosine + H2O + H(+) = 2'-deoxyinosine + NH4(+). In terms of biological role, catalyzes the hydrolytic deamination of adenosine and 2-deoxyadenosine. This Yersinia pseudotuberculosis serotype O:1b (strain IP 31758) protein is Adenosine deaminase.